A 49-amino-acid polypeptide reads, in one-letter code: Large ribosomal subunit protein bL33 (49 aa).

Belongs to the bacterial ribosomal protein bL33 family.

The sequence is that of Large ribosomal subunit protein bL33 from Fervidobacterium nodosum (strain ATCC 35602 / DSM 5306 / Rt17-B1).